The following is a 585-amino-acid chain: Zinc finger protein Eos (585 aa).

Disordered stretches follow at residues 1 to 43 and 68 to 98; these read MHTP…PDFL and EKEF…SANS. A compositionally biased stretch (basic and acidic residues) spans 25–34; sequence QGKDNLERDP. Residues 79-98 are compositionally biased toward polar residues; it reads SVSTPNSQHSSPSRSLSANS. Lysine 100 is covalently cross-linked (Glycyl lysine isopeptide (Lys-Gly) (interchain with G-Cter in SUMO2)). A Phosphoserine modification is found at serine 105. 4 C2H2-type zinc fingers span residues 159-181, 187-209, 215-237, and 248-271; these read LKCD…KRSH, FHCN…IKLH, FKCP…LRTH, and YKCN…ERCH. Residues 281-585 form an interaction with FOXP3 region; sequence AQALAGQPGD…HIVRGEHKVG (305 aa). Lysine 335 is modified (N6-acetyllysine). The tract at residues 410-489 is disordered; the sequence is PGRLELPGSR…QPPPTIVVGR (80 aa). Positions 425–429 match the CTBP-binding motif PEDLA motif; it reads PEDLA. Pro residues predominate over residues 475–484; sequence QGPPPQPPPT. Lysine 500 is covalently cross-linked (Glycyl lysine isopeptide (Lys-Gly) (interchain with G-Cter in SUMO2)). C2H2-type zinc fingers lie at residues 530–552 and 558–582; these read FKCE…MGCH and FECN…RGEH.

Belongs to the Ikaros C2H2-type zinc-finger protein family. Self-associates. Interacts with other family members; IKZF1, IKZF2, IKZF3 and IKZF5. Interacts with CTBP2. Interacts with SPI1, MITF, FOXP3 and CTBP1. Highly expressed in skeletal muscle, low levels of expression in heart, thymus, kidney, liver, and spleen. Expressed in the hematopoietic cell lines MOLT-4, NALM-6 and K-562. Highly expressed in THP-1 and M-07e cell lines, which have characteristics of myeloid and early megakaryocytic cells respectively.

The protein resides in the nucleus. Its function is as follows. DNA-binding protein that binds to the 5'GGGAATRCC-3' Ikaros-binding sequence. Transcriptional repressor. Interacts with SPI1 and MITF to repress transcription of the CTSK and ACP5 promoters via recruitment of corepressors SIN3A and CTBP2. May be involved in the development of central and peripheral nervous systems. Essential for the inhibitory function of regulatory T-cells (Treg). Mediates FOXP3-mediated gene silencing in regulatory T-cells (Treg) via recruitment of corepressor CTBP1. The polypeptide is Zinc finger protein Eos (IKZF4) (Homo sapiens (Human)).